A 251-amino-acid chain; its full sequence is GTP cyclohydrolase 1 type 2 homolog (251 aa).

The a divalent metal cation site is built by histidine 63, histidine 64, aspartate 101, histidine 219, and glutamate 223.

This sequence belongs to the GTP cyclohydrolase I type 2/NIF3 family. Toroid-shaped homohexamer. In the hexamer, 3 dimers assemble to form a ring-like structure surrounding a central hole.

The chain is GTP cyclohydrolase 1 type 2 homolog from Haemophilus influenzae (strain ATCC 51907 / DSM 11121 / KW20 / Rd).